A 301-amino-acid polypeptide reads, in one-letter code: HTH-type transcriptional regulator EstR (301 aa).

In terms of domain architecture, HTH lysR-type spans 5-62; sequence PSLRQLSYLVTLSETLHFTEAARRSFVTQSTLSGGIMELERLLGGVLVERDRQNVRLT. The segment at residues 22–41 is a DNA-binding region (H-T-H motif); it reads FTEAARRSFVTQSTLSGGIM.

This sequence belongs to the LysR transcriptional regulatory family.

Transcriptional regulator of the esterase operon. The polypeptide is HTH-type transcriptional regulator EstR (estR) (Acinetobacter baylyi (strain ATCC 33305 / BD413 / ADP1)).